Here is a 151-residue protein sequence, read N- to C-terminus: Probable ubiquitin-conjugating enzyme E2 W-B (151 aa).

Positions 3-151 (SMQKRLQKEL…TKWWYHDDTC (149 aa)) constitute a UBC core domain. The Glycyl thioester intermediate role is filled by cysteine 91.

Belongs to the ubiquitin-conjugating enzyme family.

The protein localises to the nucleus. The enzyme catalyses S-ubiquitinyl-[E1 ubiquitin-activating enzyme]-L-cysteine + [E2 ubiquitin-conjugating enzyme]-L-cysteine = [E1 ubiquitin-activating enzyme]-L-cysteine + S-ubiquitinyl-[E2 ubiquitin-conjugating enzyme]-L-cysteine.. It carries out the reaction S-ubiquitinyl-[E1 ubiquitin-activating enzyme]-L-cysteine + [acceptor protein]-N-terminal-amino acid = [E1 ubiquitin-activating enzyme]-L-cysteine + N-terminal-ubiquitinyl-[acceptor protein].. The protein operates within protein modification; protein ubiquitination. In terms of biological role, accepts ubiquitin from the E1 complex and catalyzes its covalent attachment to other proteins. Catalyzes monoubiquitination. Involved in degradation of misfolded chaperone substrate and DNA repair. This chain is Probable ubiquitin-conjugating enzyme E2 W-B (ube2wb), found in Danio rerio (Zebrafish).